Here is a 454-residue protein sequence, read N- to C-terminus: Immediate-early protein ICP-46 homolog (454 aa).

A coiled-coil region spans residues 330 to 357 (EKDIETIEKYEKTIQELIVELHNLYLKR). Positions 428-454 (SSPTASLSSLSPPSSNNNSPIRSPIRM) are disordered.

It belongs to the IIV-6 393L family.

The sequence is that of Immediate-early protein ICP-46 homolog from Invertebrate iridescent virus 6 (IIV-6).